A 478-amino-acid polypeptide reads, in one-letter code: Catalase easC (478 aa).

His54 is an active-site residue. Tyr343 provides a ligand contact to heme. The disordered stretch occupies residues 459 to 478; that stretch reads VAEKARPDSPSRAQPGQLRL.

It belongs to the catalase family. Heme serves as cofactor.

It participates in alkaloid biosynthesis; ergot alkaloid biosynthesis. Functionally, catalase; part of the gene cluster that mediates the biosynthesis of fungal ergot alkaloid. DmaW catalyzes the first step of ergot alkaloid biosynthesis by condensing dimethylallyl diphosphate (DMAP) and tryptophan to form 4-dimethylallyl-L-tryptophan. The second step is catalyzed by the methyltransferase easF that methylates 4-dimethylallyl-L-tryptophan in the presence of S-adenosyl-L-methionine, resulting in the formation of 4-dimethylallyl-L-abrine. The catalase easC and the FAD-dependent oxidoreductase easE then transform 4-dimethylallyl-L-abrine to chanoclavine-I which is further oxidized by easD in the presence of NAD(+), resulting in the formation of chanoclavine-I aldehyde. Chanoclavine-I aldehyde is the precursor of ergoamides and ergopeptines in Clavicipitaceae, and clavine-type alcaloids such as fumiclavine in Trichocomaceae. However, the metabolites downstream of chanoclavine-I aldehyde in Arthrodermataceae have not been identified yet. This Arthroderma benhamiae (strain ATCC MYA-4681 / CBS 112371) (Trichophyton mentagrophytes) protein is Catalase easC.